The chain runs to 806 residues: NADH:(hydroxy)cinnamate reductase subunit CrdB (806 aa).

Serine 257 carries the FMN phosphoryl serine modification. FAD-binding residues include alanine 310, glutamate 329, asparagine 337, threonine 338, glycine 342, glycine 343, and aspartate 576. The active-site Proton donor is arginine 635. Positions 742, 771, 786, and 787 each coordinate FAD.

Belongs to the FAD-dependent oxidoreductase 2 family. FRD/SDH subfamily. NADH:(hydroxy)cinnamate reductase Crd is a heterodimer composed of CrdA and CrdB subunits, encoded by adjacent genes. It depends on FAD as a cofactor. Requires FMN as cofactor. Is flavinylated on Ser-257 by ApbE, encoded in a neighboring gene. Covalent attachment of FMN is essential for catalytic activity.

The catalysed reaction is 3-phenylpropanoate + NAD(+) = (E)-cinnamate + NADH + H(+). The enzyme catalyses 3-(3,4-dihydroxyphenyl)propanoate + NAD(+) = (E)-caffeate + NADH + H(+). It carries out the reaction phloretate + NAD(+) = (E)-4-coumarate + NADH + H(+). It catalyses the reaction dihydroferulate + NAD(+) = (E)-ferulate + NADH + H(+). Is inactivated by molecular oxygen, allowing regulation of Crd activity by medium oxygen level. Its function is as follows. Component of the NADH:(hydroxy)cinnamate reductase Crd that catalyzes the reduction of the double bond in cinnamate, p-coumarate, caffeate, and ferulate under anaerobic conditions with NADH or methyl viologen as the electron donor. Is moderately active against acrylate and practically inactive against urocanate, fumarate, methacrylate and crotonate. CrdB is the catalytic subunit that binds substrates. Is likely involved in protecting V.ruber from (hydroxy)cinnamate poisoning. This Vibrio ruber (strain DSM 16370 / JCM 11486 / BCRC 17186 / CECT 7878 / LMG 23124 / VR1) protein is NADH:(hydroxy)cinnamate reductase subunit CrdB.